The primary structure comprises 222 residues: MDMVTVTAKTVEEAVTKALIELQTTSDKLTYEIVEKGSAGFLGIGSKPAIIRAKRKETLQDKAIEFLEQVFDAMNMAVDISVEYNETEKEMNVNLKGDDMGILIGKRGQTLDSLQYLVSLVVNKSSSDYIRVKLDTENYRERRKETLETLAKNIAYKVKRTKRSVSLEPMNPYERRIIHAALQNDKYVVTRSDGEEPFRHVIISLKRENRRDRNDRSDRNEK.

A jag_N domain region spans residues 2 to 51; sequence DMVTVTAKTVEEAVTKALIELQTTSDKLTYEIVEKGSAGFLGIGSKPAII. One can recognise a KH domain in the interval 54–133; the sequence is KRKETLQDKA…KSSSDYIRVK (80 aa). The region spanning 138 to 204 is the R3H domain; that stretch reads NYRERRKETL…EEPFRHVIIS (67 aa).

The protein belongs to the KhpB RNA-binding protein family. Forms a complex with KhpA. Homodimer or homotrimer.

The protein resides in the cytoplasm. Functionally, a probable RNA chaperone. Forms a complex with KhpA which binds to cellular RNA and controls its expression. Plays a role in peptidoglycan (PG) homeostasis and cell length regulation. The protein is RNA-binding protein KhpB of Clostridium symbiosum (Bacteroides symbiosus).